The sequence spans 325 residues: Electron transfer flavoprotein subunit alpha (325 aa).

FAD is bound at residue leucine 262–aspartate 290.

Belongs to the ETF alpha-subunit/FixB family. As to quaternary structure, heterodimer of an alpha and a beta subunit. It depends on FAD as a cofactor.

In terms of biological role, the electron transfer flavoprotein serves as a specific electron acceptor for other dehydrogenases. It transfers the electrons to the main respiratory chain via ETF-ubiquinone oxidoreductase (ETF dehydrogenase). This is Electron transfer flavoprotein subunit alpha (etfA) from Bacillus subtilis (strain 168).